The primary structure comprises 222 residues: Noggin (222 aa).

A signal peptide spans 1-19 (MDHSQCLVTIYALMVFLGL). Residue N61 is glycosylated (N-linked (GlcNAc...) asparagine). Cystine bridges form between C145–C182, C168–C218, C174–C220, and C197–C205.

It belongs to the noggin family. In terms of assembly, homodimer.

It is found in the secreted. Its function is as follows. Patterns the embryo by interrupting bone morphogenetic proteins (BMP) signaling. Binds BMP-4 and BMP-2 with high affinity. Can abolish BMP-4 activity by blocking binding to cognate cell-surface receptors. Capable of inducing dorsal development in embryos. Causes dorsal mesodermal differentiation of animal cap ectoderm when coexpressed with xWNT-8 and nuclear, sequence-specific DNA-binding protein xBRA. None of these molecules causes dorsal mesoderm formation when expressed alone. The sequence is that of Noggin (nog) from Xenopus laevis (African clawed frog).